The chain runs to 399 residues: Chorismate synthase (399 aa).

NADP(+) is bound by residues arginine 40 and arginine 46. FMN-binding positions include 135 to 137 (RAS), 256 to 257 (QA), glycine 301, 316 to 320 (KPIAT), and arginine 342.

The protein belongs to the chorismate synthase family. Homotetramer. FMNH2 serves as cofactor.

The catalysed reaction is 5-O-(1-carboxyvinyl)-3-phosphoshikimate = chorismate + phosphate. The protein operates within metabolic intermediate biosynthesis; chorismate biosynthesis; chorismate from D-erythrose 4-phosphate and phosphoenolpyruvate: step 7/7. Functionally, catalyzes the anti-1,4-elimination of the C-3 phosphate and the C-6 proR hydrogen from 5-enolpyruvylshikimate-3-phosphate (EPSP) to yield chorismate, which is the branch point compound that serves as the starting substrate for the three terminal pathways of aromatic amino acid biosynthesis. This reaction introduces a second double bond into the aromatic ring system. In Paenarthrobacter aurescens (strain TC1), this protein is Chorismate synthase.